Reading from the N-terminus, the 240-residue chain is RNA polymerase sigma factor SigI (240 aa).

The Polymerase core binding signature appears at 56-69 (DEYSIGLFAFNEAI). A DNA-binding region (H-T-H motif) is located at residues 194-213 (LKHIEPRVRVSRKTLERHRK).

This sequence belongs to the sigma-70 factor family. SigI subfamily. As to quaternary structure, interacts with RsgI.

It localises to the cytoplasm. Its activity is regulated as follows. Negatively regulated by the anti-sigma-I factor RsgI. In terms of biological role, sigma factors are initiation factors that promote the attachment of RNA polymerase to specific initiation sites and are then released. This sigma factor contributes to both stress response and virulence gene expression. In Bacillus anthracis, this protein is RNA polymerase sigma factor SigI.